The following is a 446-amino-acid chain: Palmitoyltransferase PFA4 (446 aa).

The Cytoplasmic portion of the chain corresponds to 1–8; it reads MAVQLKWP. Residues 9 to 29 traverse the membrane as a helical segment; it reads ILGVIIPCIIIFSLSYGSHYF. The Lumenal segment spans residues 30-40; sequence ILRHHLTMKQQ. A helical transmembrane segment spans residues 41 to 61; the sequence is LIYEFYVTMIWISYLLAIYTN. Over 62–161 the chain is Cytoplasmic; that stretch reads PGRVPKNYKP…GNNNLPHFMR (100 aa). Residues 114–164 form the DHHC domain; the sequence is RYCKKCNNYKPPRSHHCKICQQCVLQMDHHCPWTLNCVGNNNLPHFMRFLG. The active-site S-palmitoyl cysteine intermediate is the cysteine 144. A helical membrane pass occupies residues 162 to 182; sequence FLGWIIWGTGYLMIQLIKLII. Over 183–201 the chain is Lumenal; that stretch reads NYYENSNMPHYLFNKTELV. A helical membrane pass occupies residues 202–222; the sequence is AIIAITPLNFFVFASILVLFI. The Cytoplasmic portion of the chain corresponds to 223 to 446; that stretch reads RCLINICKGM…TDFGVDEDSD (224 aa).

Belongs to the DHHC palmitoyltransferase family. PFA4 subfamily.

It localises to the endoplasmic reticulum membrane. It catalyses the reaction L-cysteinyl-[protein] + hexadecanoyl-CoA = S-hexadecanoyl-L-cysteinyl-[protein] + CoA. In terms of biological role, mediates the reversible addition of palmitate to target proteins, thereby regulating their membrane association and biological function. The protein is Palmitoyltransferase PFA4 of Candida albicans (strain SC5314 / ATCC MYA-2876) (Yeast).